Consider the following 444-residue polypeptide: Protein EMP46 (444 aa).

Positions Met-1–Gly-46 are cleaved as a signal peptide. Residues Lys-47–Glu-408 are Lumenal-facing. The L-type lectin-like domain maps to Asp-52–Gly-269. A K(+)-binding site is contributed by Tyr-177. The cysteines at positions 196 and 230 are disulfide-linked. Residues Ile-409 to Tyr-429 form a helical membrane-spanning segment. Positions Tyr-429–Phe-432 are mediates the interactions with COPI and COPII coat complexes. Over Tyr-430–Leu-444 the chain is Cytoplasmic. Residues Lys-440–Leu-444 carry the Di-lysine motif motif.

Belongs to the EMP46/EMP47 family. In terms of assembly, interacts with EMP47 in the endoplasmic reticulum membrane in order to be transported to the Golgi apparatus. Interacts with the coatomer proteins COP1, SEC21 and SEC23.

The protein localises to the golgi apparatus membrane. It is found in the endoplasmic reticulum membrane. Its function is as follows. Involved in the secretion of glycoproteins and in nucleus architecture and gene silencing. This chain is Protein EMP46 (EMP46), found in Saccharomyces cerevisiae (strain ATCC 204508 / S288c) (Baker's yeast).